The sequence spans 272 residues: Imidazole glycerol phosphate synthase subunit HisF (272 aa).

Residues D11 and D130 contribute to the active site.

This sequence belongs to the HisA/HisF family. In terms of assembly, heterodimer of HisH and HisF.

It is found in the cytoplasm. It carries out the reaction 5-[(5-phospho-1-deoxy-D-ribulos-1-ylimino)methylamino]-1-(5-phospho-beta-D-ribosyl)imidazole-4-carboxamide + L-glutamine = D-erythro-1-(imidazol-4-yl)glycerol 3-phosphate + 5-amino-1-(5-phospho-beta-D-ribosyl)imidazole-4-carboxamide + L-glutamate + H(+). It participates in amino-acid biosynthesis; L-histidine biosynthesis; L-histidine from 5-phospho-alpha-D-ribose 1-diphosphate: step 5/9. Functionally, IGPS catalyzes the conversion of PRFAR and glutamine to IGP, AICAR and glutamate. The HisF subunit catalyzes the cyclization activity that produces IGP and AICAR from PRFAR using the ammonia provided by the HisH subunit. The protein is Imidazole glycerol phosphate synthase subunit HisF of Methanococcus maripaludis (strain C6 / ATCC BAA-1332).